The primary structure comprises 215 residues: Leucyl/phenylalanyl-tRNA--protein transferase (215 aa).

This sequence belongs to the L/F-transferase family.

Its subcellular location is the cytoplasm. The enzyme catalyses N-terminal L-lysyl-[protein] + L-leucyl-tRNA(Leu) = N-terminal L-leucyl-L-lysyl-[protein] + tRNA(Leu) + H(+). The catalysed reaction is N-terminal L-arginyl-[protein] + L-leucyl-tRNA(Leu) = N-terminal L-leucyl-L-arginyl-[protein] + tRNA(Leu) + H(+). It carries out the reaction L-phenylalanyl-tRNA(Phe) + an N-terminal L-alpha-aminoacyl-[protein] = an N-terminal L-phenylalanyl-L-alpha-aminoacyl-[protein] + tRNA(Phe). Its function is as follows. Functions in the N-end rule pathway of protein degradation where it conjugates Leu, Phe and, less efficiently, Met from aminoacyl-tRNAs to the N-termini of proteins containing an N-terminal arginine or lysine. This Campylobacter jejuni subsp. jejuni serotype O:2 (strain ATCC 700819 / NCTC 11168) protein is Leucyl/phenylalanyl-tRNA--protein transferase.